The sequence spans 123 residues: DNA-directed RNA polymerase I subunit RPA12 (123 aa).

Zn(2+)-binding residues include C17, C20, C35, C38, C84, and C87. The C4-type zinc-finger motif lies at 17–38; sequence CPDCGSVLPLPGVQDTVICPRC. A TFIIS-type zinc finger spans residues 80–120; it reads VDRRCSRCGHEGMAYYTRQMRSADEGQTVFYTCINCKFQEK. Residues 103-104 carry the Hairpin motif; the sequence is DE. Positions 112 and 115 each coordinate Zn(2+).

Belongs to the archaeal RpoM/eukaryotic RPA12/RPB9/RPC11 RNA polymerase family. Component of the RNA polymerase I (Pol I) complex consisting of 13 subunits: a ten-subunit catalytic core composed of POLR1A/RPA1, POLR1B/RPA2, POLR1C/RPAC1, POLR1D/RPAC2, POLR1H/RPA12, POLR2E/RPABC1, POLR2F/RPABC2, POLR2H/RPABC3, POLR2K/RPABC4 and POLR2L/RPABC5; a mobile stalk subunit POLR1F/RPA43 protruding from the core and additional subunits homologous to general transcription factors POLR1E/RPA49 and POLR1G/RPA34. Part of Pol I pre-initiation complex (PIC), in which Pol I core assembles with RRN3 and promoter-bound UTBF and SL1/TIF-IB complex.

Its subcellular location is the nucleus. The protein resides in the nucleolus. Its function is as follows. Core component of RNA polymerase I (Pol I), a DNA-dependent RNA polymerase which synthesizes ribosomal RNA precursors using the four ribonucleoside triphosphates as substrates. Can mediate Pol I proofreading of the nascent RNA transcript. Anchors into the Pol I active site to monitor transcription fidelity and cleave mis-incorporated 5'-ribonucleotides. The polypeptide is DNA-directed RNA polymerase I subunit RPA12 (Rattus norvegicus (Rat)).